We begin with the raw amino-acid sequence, 99 residues long: Integration host factor subunit alpha (99 aa).

It belongs to the bacterial histone-like protein family. Heterodimer of an alpha and a beta chain.

Functionally, this protein is one of the two subunits of integration host factor, a specific DNA-binding protein that functions in genetic recombination as well as in transcriptional and translational control. The sequence is that of Integration host factor subunit alpha from Alteromonas mediterranea (strain DSM 17117 / CIP 110805 / LMG 28347 / Deep ecotype).